A 313-amino-acid chain; its full sequence is Endo-beta-N-acetylglucosaminidase H (313 aa).

The or 44 signal peptide spans 1–42; it reads MFTPVRRRVRTAALALSAAAALVLGSTAASGASATPSPAPAP. A GH18 domain is found at 51–307; sequence PTSVAYVEVN…SAFTRELYGS (257 aa). Glu-174 serves as the catalytic Proton donor.

The protein belongs to the glycosyl hydrolase 18 family.

It carries out the reaction an N(4)-(oligosaccharide-(1-&gt;3)-[oligosaccharide-(1-&gt;6)]-beta-D-Man-(1-&gt;4)-beta-D-GlcNAc-(1-&gt;4)-alpha-D-GlcNAc)-L-asparaginyl-[protein] + H2O = an oligosaccharide-(1-&gt;3)-[oligosaccharide-(1-&gt;6)]-beta-D-Man-(1-&gt;4)-D-GlcNAc + N(4)-(N-acetyl-beta-D-glucosaminyl)-L-asparaginyl-[protein]. Its function is as follows. Cleaves asparagine-linked oligomannose and hybrid, but not complex, oligosaccharides from glycoproteins. This chain is Endo-beta-N-acetylglucosaminidase H, found in Streptomyces plicatus.